The primary structure comprises 391 residues: Phosphoprotein (391 aa).

Phosphothreonine is present on residues T10 and T16. Polar residues predominate over residues 54–65 (QKNIQHPTASHQ). Disordered regions lie at residues 54-98 (QKNI…EPLF) and 148-184 (PVTEFKRGGPGAAAQGQTIQEEGIDGNGASAGSKERS). S69 carries the phosphoserine modification. Residues T91, T150, and T165 each carry the phosphothreonine modification. Position 188 is a phosphoserine (S188). The segment at 216 to 279 (ISANEIMDLL…MATVKIMDPG (64 aa)) is multimerization. Positions 218-245 (ANEIMDLLRGMDARLQHLEQKVDKVLAQ) form a coiled coil. T250 bears the Phosphothreonine mark. S257 is modified (phosphoserine). Residues T258 and T282 each carry the phosphothreonine modification. A phosphoserine mark is found at S292 and S294. T298 bears the Phosphothreonine mark. Phosphoserine is present on residues S301 and S374. Residues 343-391 (AGRKVMITKMITDCVANPQMKQAFEQRLAKASTEDALNDIKRDIIRSAI) form an interaction with the nucleoprotein region. Position 375 is a phosphothreonine (T375).

The protein belongs to the rubulavirus/avulavirus P protein family. As to quaternary structure, homotetramer. Interacts (via multimerization domain) with polymerase L; this interaction forms the polymerase L-P complex. Interacts (via N-terminus) with N0 (via Ncore); this interaction allows P to chaperon N0 to avoid N polymerization before encapsidation. Interacts (via C-terminus) with N-RNA template; this interaction positions the polymerase on the template for both transcription and replication. Interacts with host RPS6KB1 kinase; this interaction may play a role in the viral replication and transcription.

Essential cofactor of the RNA polymerase L that plays a central role in the transcription and replication by forming the polymerase complex with RNA polymerase L and recruiting L to the genomic N-RNA template for RNA synthesis. Also plays a central role in the encapsidation of nascent RNA chains by forming the encapsidation complex with the nucleocapsid protein N (N-P complex). Acts as a chaperone for newly synthesized free N protein, so-called N0, allowing encapsidation of nascent RNA chains during replication. The nucleoprotein protein N prevents excessive phosphorylation of P, which leads to down-regulation of viral transcription/ replication. Participates, together with N, in the formation of viral factories (viroplasms), which are large inclusions in the host cytoplasm where replication takes place. The protein is Phosphoprotein of Mumps virus (strain Enders) (MuV).